We begin with the raw amino-acid sequence, 507 residues long: Histidine ammonia-lyase (507 aa).

The 5-imidazolinone (Ala-Gly) cross-link spans 141 to 143 (ASG). 2,3-didehydroalanine (Ser) is present on serine 142.

The protein belongs to the PAL/histidase family. Post-translationally, contains an active site 4-methylidene-imidazol-5-one (MIO), which is formed autocatalytically by cyclization and dehydration of residues Ala-Ser-Gly.

It localises to the cytoplasm. It carries out the reaction L-histidine = trans-urocanate + NH4(+). Its pathway is amino-acid degradation; L-histidine degradation into L-glutamate; N-formimidoyl-L-glutamate from L-histidine: step 1/3. This Burkholderia cenocepacia (strain ATCC BAA-245 / DSM 16553 / LMG 16656 / NCTC 13227 / J2315 / CF5610) (Burkholderia cepacia (strain J2315)) protein is Histidine ammonia-lyase.